Reading from the N-terminus, the 161-residue chain is Nucleotide-binding protein Sfri_0732 (161 aa).

The protein belongs to the YajQ family.

Nucleotide-binding protein. The sequence is that of Nucleotide-binding protein Sfri_0732 from Shewanella frigidimarina (strain NCIMB 400).